A 253-amino-acid chain; its full sequence is Hydroxyacylglutathione hydrolase (253 aa).

Zn(2+) contacts are provided by His59, His61, Asp63, His64, His118, Asp143, and His181.

This sequence belongs to the metallo-beta-lactamase superfamily. Glyoxalase II family. Monomer. The cofactor is Zn(2+).

The catalysed reaction is an S-(2-hydroxyacyl)glutathione + H2O = a 2-hydroxy carboxylate + glutathione + H(+). The protein operates within secondary metabolite metabolism; methylglyoxal degradation; (R)-lactate from methylglyoxal: step 2/2. In terms of biological role, thiolesterase that catalyzes the hydrolysis of S-D-lactoyl-glutathione to form glutathione and D-lactic acid. The polypeptide is Hydroxyacylglutathione hydrolase (Prochlorococcus marinus (strain SARG / CCMP1375 / SS120)).